The primary structure comprises 723 residues: Polyribonucleotide nucleotidyltransferase (723 aa).

Mg(2+)-binding residues include aspartate 497 and aspartate 503. The region spanning proline 564–isoleucine 623 is the KH domain. An S1 motif domain is found at glycine 633 to arginine 701. Residues arginine 701–asparagine 723 form a disordered region.

This sequence belongs to the polyribonucleotide nucleotidyltransferase family. Requires Mg(2+) as cofactor.

The protein resides in the cytoplasm. The enzyme catalyses RNA(n+1) + phosphate = RNA(n) + a ribonucleoside 5'-diphosphate. Functionally, involved in mRNA degradation. Catalyzes the phosphorolysis of single-stranded polyribonucleotides processively in the 3'- to 5'-direction. The protein is Polyribonucleotide nucleotidyltransferase of Prochlorococcus marinus (strain MIT 9313).